Consider the following 439-residue polypeptide: 23S rRNA (uracil(1939)-C(5))-methyltransferase RlmD (439 aa).

One can recognise a TRAM domain in the interval Lys10 to Lys69. The [4Fe-4S] cluster site is built by Cys82, Cys88, Cys91, and Cys169. The S-adenosyl-L-methionine site is built by Gln272, Phe301, Asn306, Glu322, Asn349, and Asp370. The active-site Nucleophile is the Cys396.

Belongs to the class I-like SAM-binding methyltransferase superfamily. RNA M5U methyltransferase family. RlmD subfamily.

It catalyses the reaction uridine(1939) in 23S rRNA + S-adenosyl-L-methionine = 5-methyluridine(1939) in 23S rRNA + S-adenosyl-L-homocysteine + H(+). Catalyzes the formation of 5-methyl-uridine at position 1939 (m5U1939) in 23S rRNA. The sequence is that of 23S rRNA (uracil(1939)-C(5))-methyltransferase RlmD from Vibrio parahaemolyticus serotype O3:K6 (strain RIMD 2210633).